Consider the following 200-residue polypeptide: Cysteine dioxygenase type 1 (200 aa).

Fe cation is bound by residues H86, H88, and H140. The segment at residues C93–Y157 is a cross-link (3'-(S-cysteinyl)-tyrosine (Cys-Tyr)).

It belongs to the cysteine dioxygenase family. As to quaternary structure, monomer. Requires Fe(2+) as cofactor. Ni(2+) is required as a cofactor. The cofactor is Zn(2+). The thioether cross-link between Cys-93 and Tyr-157 plays a structural role through stabilizing the Fe(2+) ion, and prevents the production of highly damaging free hydroxyl radicals by holding the oxygen radical via hydroxyl hydrogen. As to expression, highest expression in liver. Also expressed in kidney, lung, brain and small intestine.

The catalysed reaction is L-cysteine + O2 = 3-sulfino-L-alanine + H(+). Its pathway is organosulfur biosynthesis; taurine biosynthesis; hypotaurine from L-cysteine: step 1/2. Catalyzes the oxidation of cysteine to cysteine sulfinic acid with addition of molecular dioxygen. This chain is Cysteine dioxygenase type 1 (Cdo1), found in Mus musculus (Mouse).